Consider the following 523-residue polypeptide: Synaptotagmin-10 (523 aa).

Residues 1 to 55 (MSFHKEDGVNSLCQKALHIVTELCFAGQVEWEKCSGIFPRDRGSQGGSSTDISVS) are Vesicular-facing. A cysteine motif region spans residues 13-35 (CQKALHIVTELCFAGQVEWEKCS). The chain crosses the membrane as a helical span at residues 56–76 (LLAVVVSFCGLALLVVSLFVF). Residues 77-523 (WKLCWPCWKS…CPSPKPPSTP (447 aa)) are Cytoplasmic-facing. Thr136 bears the Phosphothreonine mark. C2 domains are found at residues 231 to 352 (ICGK…TVWK) and 363 to 496 (DLGE…THWH). Ca(2+) is bound by residues Asp262, Asp268, Asp320, Phe321, Asp322, Ser325, Asp328, Asp394, Asp400, Asp454, and Asp456.

This sequence belongs to the synaptotagmin family. Homodimer; disulfide-linked via the cysteine motif. Can also form heterodimers with SYT3, SYT6, SYT7 and SYT9. It depends on Ca(2+) as a cofactor. In terms of tissue distribution, expressed only in pancreas, lung and kidney.

The protein resides in the cytoplasmic vesicle. It is found in the secretory vesicle membrane. In terms of biological role, ca(2+) sensor specifically required for the Ca(2+)-dependent exocytosis of secretory vesicles containing IGF1 in neurons of the olfactory bulb. Exocytosis of IGF1 is required for sensory perception of smell. Not involved in Ca(2+)-dependent synaptic vesicle exocytosis. Acts through Ca(2+) and phospholipid binding to the C2 domain: Ca(2+) induces binding of the C2-domains to phospholipid membranes and to assembled SNARE-complexes; both actions contribute to triggering exocytosis. The protein is Synaptotagmin-10 (SYT10) of Homo sapiens (Human).